The chain runs to 505 residues: Mannosyl-oligosaccharide alpha-1,2-mannosidase 1B (505 aa).

A signal peptide spans 1-16; the sequence is MRTLLALAALAGFAAA. 2 N-linked (GlcNAc...) asparagine glycosylation sites follow: Asn-88 and Asn-174. Cys-325 and Cys-354 are joined by a disulfide. The N-linked (GlcNAc...) asparagine glycan is linked to Asn-359. Glu-368 functions as the Proton donor in the catalytic mechanism. Residue Thr-494 coordinates Ca(2+).

Belongs to the glycosyl hydrolase 47 family. As to quaternary structure, monomer. It depends on Ca(2+) as a cofactor. Mg(2+) serves as cofactor.

It is found in the cytoplasmic vesicle lumen. It carries out the reaction N(4)-(alpha-D-Man-(1-&gt;2)-alpha-D-Man-(1-&gt;2)-alpha-D-Man-(1-&gt;3)-[alpha-D-Man-(1-&gt;2)-alpha-D-Man-(1-&gt;3)-[alpha-D-Man-(1-&gt;2)-alpha-D-Man-(1-&gt;6)]-alpha-D-Man-(1-&gt;6)]-beta-D-Man-(1-&gt;4)-beta-D-GlcNAc-(1-&gt;4)-beta-D-GlcNAc)-L-asparaginyl-[protein] (N-glucan mannose isomer 9A1,2,3B1,2,3) + 4 H2O = N(4)-(alpha-D-Man-(1-&gt;3)-[alpha-D-Man-(1-&gt;3)-[alpha-D-Man-(1-&gt;6)]-alpha-D-Man-(1-&gt;6)]-beta-D-Man-(1-&gt;4)-beta-D-GlcNAc-(1-&gt;4)-beta-D-GlcNAc)-L-asparaginyl-[protein] (N-glucan mannose isomer 5A1,2) + 4 beta-D-mannose. The enzyme catalyses N(4)-(alpha-D-Man-(1-&gt;2)-alpha-D-Man-(1-&gt;2)-alpha-D-Man-(1-&gt;3)-[alpha-D-Man-(1-&gt;3)-[alpha-D-Man-(1-&gt;2)-alpha-D-Man-(1-&gt;6)]-alpha-D-Man-(1-&gt;6)]-beta-D-Man-(1-&gt;4)-beta-D-GlcNAc-(1-&gt;4)-beta-D-GlcNAc)-L-asparaginyl-[protein] (N-glucan mannose isomer 8A1,2,3B1,3) + 3 H2O = N(4)-(alpha-D-Man-(1-&gt;3)-[alpha-D-Man-(1-&gt;3)-[alpha-D-Man-(1-&gt;6)]-alpha-D-Man-(1-&gt;6)]-beta-D-Man-(1-&gt;4)-beta-D-GlcNAc-(1-&gt;4)-beta-D-GlcNAc)-L-asparaginyl-[protein] (N-glucan mannose isomer 5A1,2) + 3 beta-D-mannose. It participates in protein modification; protein glycosylation. Involved in the maturation of Asn-linked oligosaccharides. Progressively trims alpha-1,2-linked mannose residues from Man(9)GlcNAc(2) to produce Man(5)GlcNAc(2). The protein is Mannosyl-oligosaccharide alpha-1,2-mannosidase 1B (mns1B) of Emericella nidulans (strain FGSC A4 / ATCC 38163 / CBS 112.46 / NRRL 194 / M139) (Aspergillus nidulans).